Consider the following 79-residue polypeptide: uncharacterized protein (79 aa).

This is an uncharacterized protein from Saccharomyces cerevisiae (strain ATCC 204508 / S288c) (Baker's yeast).